The chain runs to 240 residues: NADH-quinone oxidoreductase subunit I 2 (240 aa).

4Fe-4S ferredoxin-type domains are found at residues 57-86 (TDLRTGEYKCTSCMQCAQACPVNVITIEWH) and 97-126 (DRFAIDMSRCMLCNFCVEACPFDSLVMGYD). [4Fe-4S] cluster is bound by residues C66, C69, C72, C76, C106, C109, C112, and C116. The disordered stretch occupies residues 185-240 (IHGYLGRPPLPKGYEPELKPQFRKPAEEAAEAQQAEAAGQPAAEPGKTNGEEAGQP). The span at 198–211 (YEPELKPQFRKPAE) shows a compositional bias: basic and acidic residues. Positions 215-230 (EAQQAEAAGQPAAEPG) are enriched in low complexity.

This sequence belongs to the complex I 23 kDa subunit family. As to quaternary structure, NDH-1 is composed of 14 different subunits. Subunits NuoA, H, J, K, L, M, N constitute the membrane sector of the complex. It depends on [4Fe-4S] cluster as a cofactor.

The protein localises to the cell membrane. The catalysed reaction is a quinone + NADH + 5 H(+)(in) = a quinol + NAD(+) + 4 H(+)(out). In terms of biological role, NDH-1 shuttles electrons from NADH, via FMN and iron-sulfur (Fe-S) centers, to quinones in the respiratory chain. The immediate electron acceptor for the enzyme in this species is believed to be ubiquinone. Couples the redox reaction to proton translocation (for every two electrons transferred, four hydrogen ions are translocated across the cytoplasmic membrane), and thus conserves the redox energy in a proton gradient. The chain is NADH-quinone oxidoreductase subunit I 2 from Symbiobacterium thermophilum (strain DSM 24528 / JCM 14929 / IAM 14863 / T).